The following is a 142-amino-acid chain: MKTISAKFEASQRKWILVDAENQVLGRLASRIAMRLRGKHLPAFTPHVDLGDFVVVINADKVQLTGNKWDQKLYYRHSGYMGGVKVQSARKLNAGNPEKLLRLAVWGMLPKNRLGRKLIKKLKVYKGAEHPHEAQQPTRIAL.

The protein belongs to the universal ribosomal protein uL13 family. In terms of assembly, part of the 50S ribosomal subunit.

This protein is one of the early assembly proteins of the 50S ribosomal subunit, although it is not seen to bind rRNA by itself. It is important during the early stages of 50S assembly. This is Large ribosomal subunit protein uL13 from Syntrophobacter fumaroxidans (strain DSM 10017 / MPOB).